The chain runs to 531 residues: UDP-glucuronosyltransferase 1A3 (531 aa).

Positions 1-25 (MGIQGFLQKLSGLLLLLCALPWAEG) are cleaved as a signal peptide. N-linked (GlcNAc...) asparagine glycosylation is found at asparagine 116, asparagine 139, asparagine 293, and asparagine 431. The chain crosses the membrane as a helical span at residues 489–505 (VIGFLLAIVLTVVFIVY).

The protein belongs to the UDP-glycosyltransferase family. In terms of assembly, homodimers. Homooligomer. Interacts with UGT1A1, UGT1A4, UGT1A6, UGT1A7, UGT1A8, UGT1A9 and UGT1A10 to form heterodimers.

The protein localises to the endoplasmic reticulum membrane. It carries out the reaction glucuronate acceptor + UDP-alpha-D-glucuronate = acceptor beta-D-glucuronoside + UDP + H(+). It catalyses the reaction 17beta-estradiol + UDP-alpha-D-glucuronate = 17beta-estradiol 3-O-(beta-D-glucuronate) + UDP + H(+). The catalysed reaction is 17beta-estradiol + UDP-alpha-D-glucuronate = 17beta-estradiol 17-O-(beta-D-glucuronate) + UDP + H(+). The enzyme catalyses 17alpha-estradiol + UDP-alpha-D-glucuronate = 17alpha-estradiol 3-O-(beta-D-glucuronate) + UDP + H(+). It carries out the reaction estrone + UDP-alpha-D-glucuronate = estrone 3-O-(beta-D-glucuronate) + UDP + H(+). It catalyses the reaction chenodeoxycholate + UDP-alpha-D-glucuronate = chenodeoxycholoyl-24-O-(beta-D-glucuronate) + UDP. The catalysed reaction is deoxycholate + UDP-alpha-D-glucuronate = deoxycholoyl-24-O-(beta-D-glucuronate) + UDP. The enzyme catalyses lithocholate + UDP-alpha-D-glucuronate = lithocholoyl-24-O-(beta-D-glucuronate) + UDP. It carries out the reaction hyodeoxycholate + UDP-alpha-D-glucuronate = hyodeoxycholoyl-24-O-(beta-D-glucuronate) + UDP. It catalyses the reaction hyocholate + UDP-alpha-D-glucuronate = hyocholoyl-24-O-(beta-D-glucuronate) + UDP. The catalysed reaction is calcidiol + UDP-alpha-D-glucuronate = calcidiol 25-O-(beta-D-glucuronide) + UDP + H(+). The enzyme catalyses losartan + UDP-alpha-D-glucuronate = losartan-2-N-beta-D-glucuronide + UDP. It carries out the reaction candesartan + UDP-alpha-D-glucuronate = candesartan-2-N-beta-D-glucuronide + UDP. It catalyses the reaction zolasartan + UDP-alpha-D-glucuronate = zolarsartan-2-N-beta-D-glucuronide + UDP. The catalysed reaction is (E)-ferulate + UDP-alpha-D-glucuronate = (E)-4-O-(beta-D-glucuronosyl)-ferulate + UDP + H(+). The enzyme catalyses (E)-ferulate + UDP-alpha-D-glucuronate = (E)-ferulic acid beta-D-glucuronate ester + UDP. Its function is as follows. UDP-glucuronosyltransferase (UGT) that catalyzes phase II biotransformation reactions in which lipophilic substrates are conjugated with glucuronic acid to increase the metabolite's water solubility, thereby facilitating excretion into either the urine or bile. Essential for the elimination and detoxification of drugs, xenobiotics and endogenous compounds. Catalyzes the glucuronidation of endogenous estrogen hormones such as estradiol and estrone. Contributes to bile acid (BA) detoxification by catalyzing the glucuronidation of BA substrates, which are natural detergents for dietary lipids absorption. Involved in the glucuronidation of calcidiol, which is the major circulating form of vitamin D3, essential for the regulation of calcium and phosphate homeostasis. Involved in the glucuronidation of the phytochemical ferulic acid at the phenolic or the carboxylic acid group. Involved in the glucuronidation of the AGTR1 angiotensin receptor antagonists losartan, candesartan and zolarsartan, which can inhibit the effect of angiotensin II. The polypeptide is UDP-glucuronosyltransferase 1A3 (Rattus norvegicus (Rat)).